Reading from the N-terminus, the 190-residue chain is Large ribosomal subunit protein uL6 (190 aa).

It belongs to the universal ribosomal protein uL6 family.

The sequence is that of Large ribosomal subunit protein uL6 (RpL9) from Drosophila melanogaster (Fruit fly).